An 816-amino-acid polypeptide reads, in one-letter code: Phosphatidylinositol 4-kinase beta (816 aa).

Disordered regions lie at residues 1-28 (MGDTVVAPAPLKPASESTPGPPGNNGGS), 93-120 (PPTGIREEDDETEATVASGTAKGARRRR), and 249-318 (HRKR…SFSS). Position 2 is an N-acetylglycine (glycine 2). The segment at 2–68 (GDTVVAPAPL…VKLSHGGVAS (67 aa)) is interaction with ACBD3. The region spanning 49–242 (QKACQEVLQK…GTKLRRLILS (194 aa)) is the PIK helical domain. A Phosphoserine modification is found at serine 258. Residue threonine 263 is modified to Phosphothreonine. A phosphoserine mark is found at serine 266, serine 275, serine 277, serine 284, serine 294, serine 428, and serine 511. Low complexity predominate over residues 278–294 (DATASISLSSSLKRTAS). Residues threonine 517 and threonine 519 each carry the phosphothreonine modification. In terms of domain architecture, PI3K/PI4K catalytic spans 535 to 801 (EPWQEKVRRI…MVDGSMRSIT (267 aa)). Positions 541 to 547 (VRRIREG) are G-loop. Residues 668–676 (QVKDRHNGN) form a catalytic loop region. The segment at 687–711 (HIDFGFILSSSPRNLGFETSAFKLT) is activation loop.

Belongs to the PI3/PI4-kinase family. Type III PI4K subfamily. Interacts with ARF1 and ARF3 in the Golgi complex, but not with ARF4, ARF5 or ARF6. Interacts with NCS1/FREQ in a calcium-independent manner. Interacts with CALN1/CABP8 and CALN2/CABP7; in a calcium-dependent manner; this interaction competes with NCS1/FREQ binding. Interacts with ACBD3. Interacts with ARMH3, YWHAB, YWHAE, YWHAG, YWHAH, YWHAQ, YWHAZ and SFN. Interacts with GGA2 (via VHS domain); the interaction is important for PI4KB location at the Golgi apparatus membrane. Interacts with ATG9A. The cofactor is Mg(2+). It depends on Mn(2+) as a cofactor.

Its subcellular location is the endomembrane system. It is found in the mitochondrion outer membrane. The protein localises to the rough endoplasmic reticulum membrane. The protein resides in the golgi apparatus. It localises to the golgi apparatus membrane. The catalysed reaction is a 1,2-diacyl-sn-glycero-3-phospho-(1D-myo-inositol) + ATP = a 1,2-diacyl-sn-glycero-3-phospho-(1D-myo-inositol 4-phosphate) + ADP + H(+). Its activity is regulated as follows. Inhibited by wortmannin. Increased kinase activity upon interaction with NCS1/FREQ. Functionally, phosphorylates phosphatidylinositol (PI) in the first committed step in the production of the second messenger inositol-1,4,5,-trisphosphate (PIP). May regulate Golgi disintegration/reorganization during mitosis, possibly via its phosphorylation. Involved in Golgi-to-plasma membrane trafficking. May play an important role in the inner ear development. The chain is Phosphatidylinositol 4-kinase beta (PI4KB) from Rhinolophus ferrumequinum (Greater horseshoe bat).